The following is a 602-amino-acid chain: Baseplate wedge protein gp10 (602 aa).

Over residues 501–512 the composition is skewed to polar residues; sequence LNNNDLDSGGNP. A disordered region spans residues 501 to 523; the sequence is LNNNDLDSGGNPSHTAGGTGGST.

It belongs to the T4likevirus baseplate wedge protein gp10 family. In terms of assembly, homotrimer; disulfide-linked. Heteromultimer with gp7; a gp10 molecule is disulfide-linked to gp7 and the other two remaining gp10 molecules form a disulfide bond. The gp10 trimer interacts with gp11 trimer and with the short tail fiber (STF) composed of the gp12 trimer. Part of the baseplate macromolecular complex which consists of gp5, gp5.4, gp27 (central spike complex); gp6, gp25, gp53 (inner baseplate); gp7, gp8 (intermediate baseplate); gp9, gp10, gp11, gp12 (peripheral); gp48 and gp54 (proximal region of the tail tube).

It localises to the virion. In terms of biological role, peripheral baseplate protein that is part of the tail fiber network. Connects the short tail fibers to the baseplate. During infection, the baseplate undergoes a conformational change from a dome-shaped to a star-shaped structure. At this point, gp10 rotates and acts as a lever that unfolds the short tail fibers, which then interact with host cell surface receptors. Involved in the tail assembly. The sequence is that of Baseplate wedge protein gp10 (10) from Escherichia coli (Bacteriophage T4).